The chain runs to 282 residues: tRNA (guanine-N(1)-)-methyltransferase (282 aa).

The disordered stretch occupies residues 77-114; it reads TGPAATVSDLESSAEHKRNLRPATTNGDAEPLGEKAGG. S-adenosyl-L-methionine contacts are provided by residues glycine 149 and 173-178; that span reads IGDYVL.

This sequence belongs to the RNA methyltransferase TrmD family. As to quaternary structure, homodimer.

Its subcellular location is the cytoplasm. The enzyme catalyses guanosine(37) in tRNA + S-adenosyl-L-methionine = N(1)-methylguanosine(37) in tRNA + S-adenosyl-L-homocysteine + H(+). Functionally, specifically methylates guanosine-37 in various tRNAs. The chain is tRNA (guanine-N(1)-)-methyltransferase from Corynebacterium jeikeium (strain K411).